Here is a 220-residue protein sequence, read N- to C-terminus: Iron-sulfur cluster repair protein YtfE (220 aa).

The protein belongs to the RIC family. YtfE subfamily. As to quaternary structure, homodimer.

Its subcellular location is the cytoplasm. Its function is as follows. Di-iron-containing protein involved in the repair of iron-sulfur clusters damaged by oxidative and nitrosative stress conditions. This is Iron-sulfur cluster repair protein YtfE from Salmonella schwarzengrund (strain CVM19633).